Reading from the N-terminus, the 89-residue chain is MSLDKGTKEEITKKFQLHEKDTGSADVQIAILTERITELTEHLKRAPKDHGSRLALLKLVGQRRRLLDYLNSTDTKRYQTLINKLKLRR.

This sequence belongs to the universal ribosomal protein uS15 family. As to quaternary structure, part of the 30S ribosomal subunit. Forms a bridge to the 50S subunit in the 70S ribosome, contacting the 23S rRNA.

Functionally, one of the primary rRNA binding proteins, it binds directly to 16S rRNA where it helps nucleate assembly of the platform of the 30S subunit by binding and bridging several RNA helices of the 16S rRNA. In terms of biological role, forms an intersubunit bridge (bridge B4) with the 23S rRNA of the 50S subunit in the ribosome. The chain is Small ribosomal subunit protein uS15 from Protochlamydia amoebophila (strain UWE25).